The sequence spans 311 residues: HPr kinase/phosphorylase (311 aa).

Catalysis depends on residues His-138 and Lys-159. 153-160 (GDSGIGKS) lines the ATP pocket. Ser-160 contributes to the Mg(2+) binding site. The active-site Proton acceptor; for phosphorylation activity. Proton donor; for dephosphorylation activity is the Asp-177. Residues 201–210 (LEIRGVGIID) are important for the catalytic mechanism of both phosphorylation and dephosphorylation. Glu-202 contributes to the Mg(2+) binding site. Residue Arg-243 is part of the active site. Residues 264–269 (PVKTGR) form an important for the catalytic mechanism of dephosphorylation region.

It belongs to the HPrK/P family. Homohexamer. Mg(2+) serves as cofactor.

The catalysed reaction is [HPr protein]-L-serine + ATP = [HPr protein]-O-phospho-L-serine + ADP + H(+). It catalyses the reaction [HPr protein]-O-phospho-L-serine + phosphate + H(+) = [HPr protein]-L-serine + diphosphate. In terms of biological role, catalyzes the ATP- as well as the pyrophosphate-dependent phosphorylation of a specific serine residue in HPr, a phosphocarrier protein of the phosphoenolpyruvate-dependent sugar phosphotransferase system (PTS). HprK/P also catalyzes the pyrophosphate-producing, inorganic phosphate-dependent dephosphorylation (phosphorolysis) of seryl-phosphorylated HPr (P-Ser-HPr). The two antagonistic activities of HprK/P are regulated by several intracellular metabolites, which change their concentration in response to the absence or presence of rapidly metabolisable carbon sources (glucose, fructose, etc.) in the growth medium. Therefore, by controlling the phosphorylation state of HPr, HPrK/P is a sensor enzyme that plays a major role in the regulation of carbon metabolism and sugar transport: it mediates carbon catabolite repression (CCR), and regulates PTS-catalyzed carbohydrate uptake and inducer exclusion. The sequence is that of HPr kinase/phosphorylase from Streptococcus agalactiae serotype Ia (strain ATCC 27591 / A909 / CDC SS700).